Consider the following 584-residue polypeptide: 2-succinyl-5-enolpyruvyl-6-hydroxy-3-cyclohexene-1-carboxylate synthase (584 aa).

This sequence belongs to the TPP enzyme family. MenD subfamily. Homodimer. Mg(2+) is required as a cofactor. It depends on Mn(2+) as a cofactor. The cofactor is thiamine diphosphate.

It catalyses the reaction isochorismate + 2-oxoglutarate + H(+) = 5-enolpyruvoyl-6-hydroxy-2-succinyl-cyclohex-3-ene-1-carboxylate + CO2. The protein operates within quinol/quinone metabolism; 1,4-dihydroxy-2-naphthoate biosynthesis; 1,4-dihydroxy-2-naphthoate from chorismate: step 2/7. It functions in the pathway quinol/quinone metabolism; menaquinone biosynthesis. Functionally, catalyzes the thiamine diphosphate-dependent decarboxylation of 2-oxoglutarate and the subsequent addition of the resulting succinic semialdehyde-thiamine pyrophosphate anion to isochorismate to yield 2-succinyl-5-enolpyruvyl-6-hydroxy-3-cyclohexene-1-carboxylate (SEPHCHC). The polypeptide is 2-succinyl-5-enolpyruvyl-6-hydroxy-3-cyclohexene-1-carboxylate synthase (Bacillus thuringiensis subsp. konkukian (strain 97-27)).